A 185-amino-acid chain; its full sequence is Putative gustatory receptor clone PTE01 (185 aa).

Residues 1–11 (MYLFLSNLSLA) form a helical membrane-spanning segment. At 12–42 (DISFTSTTLPKMIVDIQTNNRAISYSGCLTQ) the chain is on the extracellular side. Residues 43-62 (MSFFMLFGCLDSLLLTAMAY) traverse the membrane as a helical segment. The Cytoplasmic segment spans residues 63–84 (DRFVAICHPLHYQVIMNPRLCG). The helical transmembrane segment at 85–105 (LLVFLSILISLLVSQLHNSVV) threads the bilayer. The Extracellular portion of the chain corresponds to 106–138 (LQLTYFKSVDISHFFCDPSLLLNLACSDTFTNN). A helical transmembrane segment spans residues 139 to 160 (IVMYFVGAISGFLPISGIFFSY). At 161 to 182 (YKIVSSILRMPSPGGKYKAFST) the chain is on the cytoplasmic side. A helical transmembrane segment spans residues 183-185 (CGS).

It belongs to the G-protein coupled receptor 1 family. As to expression, tongue specific.

The protein localises to the cell membrane. Its function is as follows. Possible taste receptor. In Rattus norvegicus (Rat), this protein is Putative gustatory receptor clone PTE01.